We begin with the raw amino-acid sequence, 426 residues long: Serine hydroxymethyltransferase (426 aa).

Residues Leu-118 and 122-124 (GHL) each bind (6S)-5,6,7,8-tetrahydrofolate. N6-(pyridoxal phosphate)lysine is present on Lys-227. A disordered region spans residues 342-368 (NTIPNDPKPPTQASGIRLGTPAMTTRG).

This sequence belongs to the SHMT family. Homodimer. Requires pyridoxal 5'-phosphate as cofactor.

Its subcellular location is the cytoplasm. It catalyses the reaction (6R)-5,10-methylene-5,6,7,8-tetrahydrofolate + glycine + H2O = (6S)-5,6,7,8-tetrahydrofolate + L-serine. It functions in the pathway one-carbon metabolism; tetrahydrofolate interconversion. Its pathway is amino-acid biosynthesis; glycine biosynthesis; glycine from L-serine: step 1/1. Its function is as follows. Catalyzes the reversible interconversion of serine and glycine with tetrahydrofolate (THF) serving as the one-carbon carrier. This reaction serves as the major source of one-carbon groups required for the biosynthesis of purines, thymidylate, methionine, and other important biomolecules. Also exhibits THF-independent aldolase activity toward beta-hydroxyamino acids, producing glycine and aldehydes, via a retro-aldol mechanism. This chain is Serine hydroxymethyltransferase, found in Thermomicrobium roseum (strain ATCC 27502 / DSM 5159 / P-2).